The chain runs to 249 residues: Probable phosphoglycerate mutase (249 aa).

Substrate contacts are provided by residues 9 to 16 (RHGESTWN), 22 to 23 (TG), R61, 88 to 91 (ERMY), K99, 115 to 116 (RR), and 184 to 185 (GN). The active-site Tele-phosphohistidine intermediate is H10. E88 (proton donor/acceptor) is an active-site residue.

The protein belongs to the phosphoglycerate mutase family. BPG-dependent PGAM subfamily. Homodimer.

It catalyses the reaction (2R)-2-phosphoglycerate = (2R)-3-phosphoglycerate. It carries out the reaction (2R)-3-phospho-glyceroyl phosphate = (2R)-2,3-bisphosphoglycerate + H(+). Functionally, catalyzes the interconversion of 2-phosphoglycerate and 3-phosphoglycerate. This chain is Probable phosphoglycerate mutase (gpmA), found in Dictyostelium discoideum (Social amoeba).